A 532-amino-acid chain; its full sequence is Flavin-containing monooxygenase 1 (532 aa).

A2 is modified (N-acetylalanine). Residues 2–510 (AKRVAIVGAG…TRIVKESPSP (509 aa)) are Lumenal-facing. Residues 9-13 (GAGVS), E32, 40-41 (LW), and 61-62 (NS) each bind FAD. 60–61 (SN) lines the NADP(+) pocket. An N-linked (GlcNAc...) (high mannose) asparagine glycan is attached at N120. 195 to 198 (SGTD) lines the NADP(+) pocket. Residues 511–531 (FASLLKLFSFLALLVAIFQIF) form a helical membrane-spanning segment. L532 is a topological domain (cytoplasmic).

Belongs to the FMO family. The cofactor is FAD. Liver.

The protein resides in the endoplasmic reticulum membrane. It carries out the reaction hypotaurine + NADPH + O2 + H(+) = taurine + NADP(+) + H2O. The catalysed reaction is hypotaurine + NADH + O2 + H(+) = taurine + NAD(+) + H2O. It catalyses the reaction trimethylamine + NADPH + O2 = trimethylamine N-oxide + NADP(+) + H2O. The enzyme catalyses N,N-dimethylaniline + NADPH + O2 + H(+) = N,N-dimethylaniline N-oxide + NADP(+) + H2O. Its function is as follows. Broad spectrum monooxygenase that catalyzes the oxygenation of a wide variety of nitrogen- and sulfur-containing compounds including xenobiotics. Catalyzes the S-oxygenation of hypotaurine to produce taurine, an organic osmolyte involved in cell volume regulation as well as a variety of cytoprotective and developmental processes. In vitro, catalyzes the N-oxygenation of trimethylamine (TMA) to produce trimethylamine N-oxide (TMAO) and could therefore participate to the detoxification of this compound that is generated by the action of gut microbiota from dietary precursors such as choline, choline containing compounds, betaine or L-carnitine. The polypeptide is Flavin-containing monooxygenase 1 (FMO1) (Sus scrofa (Pig)).